A 230-amino-acid polypeptide reads, in one-letter code: Ureidoacrylate amidohydrolase RutB (230 aa).

The Proton acceptor role is filled by aspartate 24. Lysine 133 is a catalytic residue. Catalysis depends on cysteine 166, which acts as the Nucleophile.

Belongs to the isochorismatase family. RutB subfamily.

The enzyme catalyses (Z)-3-ureidoacrylate + H2O + H(+) = (Z)-3-aminoacrylate + NH4(+) + CO2. The catalysed reaction is (Z)-3-ureidoacrylate + H2O = (Z)-3-aminoacrylate + carbamate + H(+). It catalyses the reaction (Z)-2-methylureidoacrylate + H2O + H(+) = (Z)-2-methylaminoacrylate + NH4(+) + CO2. Its function is as follows. Hydrolyzes ureidoacrylate to form aminoacrylate and carbamate. The carbamate hydrolyzes spontaneously, thereby releasing one of the nitrogen atoms of the pyrimidine ring as ammonia and one of its carbon atoms as CO2. This chain is Ureidoacrylate amidohydrolase RutB, found in Escherichia coli O157:H7.